A 155-amino-acid chain; its full sequence is Pathogenesis-related protein 2 (155 aa).

The protein belongs to the BetVI family.

In Phaseolus vulgaris (Kidney bean), this protein is Pathogenesis-related protein 2.